The following is a 207-amino-acid chain: Uridine kinase (207 aa).

11–18 (GGSGSGKT) contacts ATP.

The protein belongs to the uridine kinase family.

It is found in the cytoplasm. The enzyme catalyses uridine + ATP = UMP + ADP + H(+). It carries out the reaction cytidine + ATP = CMP + ADP + H(+). It functions in the pathway pyrimidine metabolism; CTP biosynthesis via salvage pathway; CTP from cytidine: step 1/3. The protein operates within pyrimidine metabolism; UMP biosynthesis via salvage pathway; UMP from uridine: step 1/1. This chain is Uridine kinase, found in Staphylococcus haemolyticus (strain JCSC1435).